Consider the following 152-residue polypeptide: Ribosomal RNA large subunit methyltransferase H (152 aa).

S-adenosyl-L-methionine contacts are provided by residues leucine 71, glycine 101, and 120 to 125; that span reads LSKLTF.

The protein belongs to the RNA methyltransferase RlmH family. As to quaternary structure, homodimer.

The protein localises to the cytoplasm. It catalyses the reaction pseudouridine(1915) in 23S rRNA + S-adenosyl-L-methionine = N(3)-methylpseudouridine(1915) in 23S rRNA + S-adenosyl-L-homocysteine + H(+). Specifically methylates the pseudouridine at position 1915 (m3Psi1915) in 23S rRNA. The chain is Ribosomal RNA large subunit methyltransferase H from Thermosipho melanesiensis (strain DSM 12029 / CIP 104789 / BI429).